Reading from the N-terminus, the 156-residue chain is Small ribosomal subunit protein uS7 (156 aa).

It belongs to the universal ribosomal protein uS7 family. Part of the 30S ribosomal subunit. Contacts proteins S9 and S11.

Functionally, one of the primary rRNA binding proteins, it binds directly to 16S rRNA where it nucleates assembly of the head domain of the 30S subunit. Is located at the subunit interface close to the decoding center, probably blocks exit of the E-site tRNA. The protein is Small ribosomal subunit protein uS7 of Chlorobaculum tepidum (strain ATCC 49652 / DSM 12025 / NBRC 103806 / TLS) (Chlorobium tepidum).